Reading from the N-terminus, the 90-residue chain is Arminin 45266 (90 aa).

Positions 1 to 20 (MKSASLILFVALVALTYARS) are cleaved as a signal peptide. Positions 21–59 (YEDVKEEIKNEVEKEILDDLEEENDELDDNTQEVNDPRA) are excised as a propeptide. T87 carries the post-translational modification Threonine amide.

Belongs to the arminin family. In terms of tissue distribution, expressed in entodermal epithelium along the body column.

It localises to the secreted. The protein localises to the target cell membrane. In terms of biological role, antimicrobial peptide with a broad-spectrum antimicrobial activity. Keeps its antibacterial activity under a wide range of salt concentrations that mimic physiological conditions of human blood, which is surprising, since Hydra is an obligate freshwater animal with nearly no salt tolerance. Does not affect red blood cells. In Hydra vulgaris (Hydra), this protein is Arminin 45266.